The chain runs to 208 residues: Uracil phosphoribosyltransferase (208 aa).

5-phospho-alpha-D-ribose 1-diphosphate contacts are provided by residues Arg-78, Arg-103, and Asp-130 to Ser-138. Residues Ile-193 and Gly-198–Ala-200 contribute to the uracil site. Asp-199 contacts 5-phospho-alpha-D-ribose 1-diphosphate.

The protein belongs to the UPRTase family. Mg(2+) is required as a cofactor.

It catalyses the reaction UMP + diphosphate = 5-phospho-alpha-D-ribose 1-diphosphate + uracil. The protein operates within pyrimidine metabolism; UMP biosynthesis via salvage pathway; UMP from uracil: step 1/1. Allosterically activated by GTP. Functionally, catalyzes the conversion of uracil and 5-phospho-alpha-D-ribose 1-diphosphate (PRPP) to UMP and diphosphate. The sequence is that of Uracil phosphoribosyltransferase from Haemophilus ducreyi (strain 35000HP / ATCC 700724).